The sequence spans 112 residues: Large ribosomal subunit protein uL22 (112 aa).

This sequence belongs to the universal ribosomal protein uL22 family. As to quaternary structure, part of the 50S ribosomal subunit.

Its function is as follows. This protein binds specifically to 23S rRNA; its binding is stimulated by other ribosomal proteins, e.g. L4, L17, and L20. It is important during the early stages of 50S assembly. It makes multiple contacts with different domains of the 23S rRNA in the assembled 50S subunit and ribosome. In terms of biological role, the globular domain of the protein is located near the polypeptide exit tunnel on the outside of the subunit, while an extended beta-hairpin is found that lines the wall of the exit tunnel in the center of the 70S ribosome. The chain is Large ribosomal subunit protein uL22 from Finegoldia magna (strain ATCC 29328 / DSM 20472 / WAL 2508) (Peptostreptococcus magnus).